The sequence spans 410 residues: Sprouty-related, EVH1 domain-containing protein 3 (410 aa).

In terms of domain architecture, WH1 spans 1–113 (MVRVRAVVMA…KSLLAALAAL (113 aa)). The segment at 117–210 (SLTPSSSSSS…PEPSEPLAGA (94 aa)) is disordered. Low complexity-rich tracts occupy residues 120–130 (PSSSSSSSSPS) and 147–165 (DSSS…AAAP). The 50-residue stretch at 195–244 (LPFTGIPEPSEPLAGAGGLGWGGRGYEDYRRSGPPAPLALSTCVVRFAKT) folds into the KBD domain. Position 240 is an asymmetric dimethylarginine (Arg-240). Arg-248 carries the omega-N-methylarginine modification. A disordered region spans residues 258–288 (LPAPLTEAAPPAPPARPPPGPGPSSAPAKAS). Residues 267 to 281 (PPAPPARPPPGPGPS) are compositionally biased toward pro residues. The SPR domain occupies 296-407 (RCVHCRALFR…CAGCGGRHEE (112 aa)).

In terms of assembly, interacts with palmitoyltransferase ZDHHC17/HIP14; the interaction leads to palmitoylation of SPRED3. Post-translationally, phosphorylated on tyrosine. In terms of processing, palmitoylated by ZDHHC17/HIP14. Ubiquitinated.

The protein localises to the cell membrane. Functionally, tyrosine kinase substrate that inhibits growth-factor-mediated activation of MAP kinase. Inhibits fibroblast growth factor (FGF)-induced retinal lens fiber differentiation, probably by inhibiting FGF-mediated phosphorylation of ERK1/2. Inhibits TGFB-induced epithelial-to-mesenchymal transition in lens epithelial cells. The sequence is that of Sprouty-related, EVH1 domain-containing protein 3 (SPRED3) from Homo sapiens (Human).